The chain runs to 205 residues: High frequency lysogenization protein HflD homolog (205 aa).

Belongs to the HflD family.

Its subcellular location is the cytoplasm. The protein resides in the cell inner membrane. The protein is High frequency lysogenization protein HflD homolog of Shewanella baltica (strain OS185).